Reading from the N-terminus, the 414-residue chain is Apolipoprotein N-acyltransferase (414 aa).

A run of 6 helical transmembrane segments spans residues Gly19–Ile39, Thr40–Pro60, Ser63–Phe83, Leu91–Leu111, Leu121–Val141, and Leu153–Leu173. The CN hydrolase domain occupies Ile202–Pro414. The Proton acceptor role is filled by Glu243. Lys298 is a catalytic residue. The active-site Nucleophile is the Cys351.

This sequence belongs to the CN hydrolase family. Apolipoprotein N-acyltransferase subfamily.

The protein localises to the cell inner membrane. The enzyme catalyses N-terminal S-1,2-diacyl-sn-glyceryl-L-cysteinyl-[lipoprotein] + a glycerophospholipid = N-acyl-S-1,2-diacyl-sn-glyceryl-L-cysteinyl-[lipoprotein] + a 2-acyl-sn-glycero-3-phospholipid + H(+). It participates in protein modification; lipoprotein biosynthesis (N-acyl transfer). Its function is as follows. Catalyzes the phospholipid dependent N-acylation of the N-terminal cysteine of apolipoprotein, the last step in lipoprotein maturation. The chain is Apolipoprotein N-acyltransferase from Wolinella succinogenes (strain ATCC 29543 / DSM 1740 / CCUG 13145 / JCM 31913 / LMG 7466 / NCTC 11488 / FDC 602W) (Vibrio succinogenes).